Here is a 904-residue protein sequence, read N- to C-terminus: Protein abrupt (904 aa).

Residues 1–15 (MTESTQLQTAENNNA) show a composition bias toward polar residues. Disordered regions lie at residues 1-30 (MTES…TSSV) and 53-72 (GSAL…HQQQ). Residues 103 to 168 (VDVTLACDER…MYNGEVNVSH (66 aa)) form the BTB domain. Positions 204–238 (SHNSSNNNNNNSSSNNSLSNNNNNNNNNAESSNHN) are enriched in low complexity. Disordered regions lie at residues 204–287 (SHNS…LNSP), 349–390 (ASSA…PPPQ), 411–438 (LLDR…KDRE), and 451–501 (ALEN…NQRS). Polar residues predominate over residues 239–253 (KISSYLSPNQTSAAC). The segment covering 254–286 (NNSSNSNSNNHSSSHNNSSSNNISGSLNSSLNS) has biased composition (low complexity). Residues 429-438 (SGRDTSKDRE) are compositionally biased toward basic and acidic residues. The segment covering 452–461 (LENSNGQQAN) has biased composition (polar residues). At serine 474 the chain carries Phosphoserine. Over residues 481–500 (PSDRGDGQHDGTLDGIDNQR) the composition is skewed to basic and acidic residues. 2 consecutive C2H2-type zinc fingers follow at residues 544–567 (RPCP…EDKH) and 573–596 (YRCV…SRQH). Disordered stretches follow at residues 633-696 (ELRA…GGSS) and 832-904 (AAGN…VHNT). A compositionally biased stretch (gly residues) spans 642 to 655 (GGSGSSGGGGGGGS). Acidic residues predominate over residues 671 to 682 (DDAEDSDDDPED). Phosphoserine is present on residues serine 837, serine 846, and serine 868. Residues 851 to 868 (MGHDEMAENDGDMRREGS) are compositionally biased toward basic and acidic residues. Positions 876-886 (DNNQSGSNHEV) are enriched in polar residues. Phosphoserine is present on residues serine 889 and serine 896.

Expressed in CNS midline cells during embryonic stages 9-13. Expression also seen in cells of the stomagastric nervous system. Segmentally repeated stripes of ectodermal expression appear at stage 11 that become uniform by stage 12 and throughout embryogenesis. Expressed at variable levels in somatic muscles from stage 16 and in all imaginal disks during larval development. Expression is seen in da neurons that grow in two-dimensional dendrites underneath the epidermis during late embryonic, larval, and pupal stages.

Its subcellular location is the nucleus. Its function is as follows. Expression is vital for development; may be involved in transcriptional regulation. In embryos, muscle specific expression is required for segmental nerve b (SNb) motoneuron target recognition within ventral longitudinal muscles. Has a role in establishing and maintaining embryonic muscle attachments, adult sensory cell formation (macrochaetae) and morphogenesis of adult appendages (legs, antenna aristae and male external genitalia). Has a role in the morphogenesis of the class I dendritic neurons: selective expression of ab in class I da neurons plays a pivotal role in forming dendritic arbors, which are characteristic of the class I cells. The development of more complex arbors of class II-IV neurons depends on the absence of ab. This chain is Protein abrupt (ab), found in Drosophila melanogaster (Fruit fly).